A 534-amino-acid chain; its full sequence is Prolyl 4-hydroxylase subunit alpha-1 (534 aa).

The N-terminal stretch at 1-17 (MIWYILIIGILLPQSLA) is a signal peptide. A glycan (N-linked (GlcNAc...) asparagine) is linked at asparagine 113. The TPR repeat unit spans residues 205–238 (VSVLDYLSYAVYQQGDLDKALLLTKKLLELDPEH). Residue asparagine 259 is glycosylated (N-linked (GlcNAc...) asparagine). Residues 411–519 (TAEELQVANY…KWVSNKWLHE (109 aa)) form the Fe2OG dioxygenase domain. Positions 429, 431, and 500 each coordinate Fe cation. Lysine 510 is a 2-oxoglutarate binding site.

The protein belongs to the P4HA family. In terms of assembly, heterotetramer of two alpha-1 chains and two beta chains (P4HB)(the beta chain is the multi-functional PDI), where P4HB plays the role of a structural subunit; this tetramer catalyzes the formation of 4-hydroxyproline in collagen. The cofactor is Fe(2+). L-ascorbate serves as cofactor. In terms of tissue distribution, expressed in the heart, liver, skeletal muscle, kidney, placenta, lung and pancreas.

It is found in the endoplasmic reticulum lumen. The enzyme catalyses L-prolyl-[collagen] + 2-oxoglutarate + O2 = trans-4-hydroxy-L-prolyl-[collagen] + succinate + CO2. Inhibited by poly(L-proline). Functionally, catalyzes the post-translational formation of 4-hydroxyproline in -Xaa-Pro-Gly- sequences in collagens and other proteins. This is Prolyl 4-hydroxylase subunit alpha-1 (P4HA1) from Homo sapiens (Human).